The primary structure comprises 158 residues: MRKRQAKKRPLLPDPKFNDQLVTRFVNMMMWDGKKSVAFKIFYDAIAIVDEKKQDEEKTGLEIWKDALSNVMPHVEVRSRRVGGATFQIPMQIRPDRKVSTAMKWLISFSRKRNEKSMAGKLAAEVLAAAKEEGAAVKKRVDTHKMAEANKAFSHFRF.

This sequence belongs to the universal ribosomal protein uS7 family. As to quaternary structure, part of the 30S ribosomal subunit. Contacts proteins S9 and S11.

Functionally, one of the primary rRNA binding proteins, it binds directly to 16S rRNA where it nucleates assembly of the head domain of the 30S subunit. Is located at the subunit interface close to the decoding center, probably blocks exit of the E-site tRNA. This chain is Small ribosomal subunit protein uS7, found in Christiangramia forsetii (strain DSM 17595 / CGMCC 1.15422 / KT0803) (Gramella forsetii).